The following is a 189-amino-acid chain: Large ribosomal subunit protein bL9 (189 aa).

This sequence belongs to the bacterial ribosomal protein bL9 family.

Its function is as follows. Binds to the 23S rRNA. This Cereibacter sphaeroides (strain KD131 / KCTC 12085) (Rhodobacter sphaeroides) protein is Large ribosomal subunit protein bL9.